The primary structure comprises 420 residues: L-glutamine:2-deoxy-scyllo-inosose aminotransferase (420 aa).

N6-(pyridoxal phosphate)lysine is present on Lys201.

Belongs to the DegT/DnrJ/EryC1 family. L-glutamine:2-deoxy-scyllo-inosose/scyllo-inosose aminotransferase subfamily. Pyridoxal 5'-phosphate serves as cofactor.

The enzyme catalyses 2-deoxy-L-scyllo-inosose + L-glutamine = 2-deoxy-scyllo-inosamine + 2-oxoglutaramate. It carries out the reaction 3-amino-2,3-dideoxy-scyllo-inosose + L-glutamine = 2-deoxystreptamine + 2-oxoglutaramate. The protein operates within metabolic intermediate biosynthesis; 2-deoxystreptamine biosynthesis; 2-deoxystreptamine from D-glucose 6-phosphate: step 2/4. It functions in the pathway antibiotic biosynthesis; gentamicin biosynthesis. Functionally, catalyzes the PLP-dependent transamination of 2-deoxy-scyllo-inosose (2-DOI) to form 2-deoxy-scyllo-inosamine (2-DOIA) using L-glutamine as the amino donor. Also catalyzes the transamination of 3-amino-2,3-dideoxy-scyllo-inosose (keto-2-DOIA) into 2-deoxystreptamine (2-DOS). This chain is L-glutamine:2-deoxy-scyllo-inosose aminotransferase (gntA), found in Micromonospora echinospora (Micromonospora purpurea).